The chain runs to 139 residues: Putative nickel-responsive regulator (139 aa).

Ni(2+)-binding residues include His79, His90, His92, and Cys98.

This sequence belongs to the transcriptional regulatory CopG/NikR family. Ni(2+) serves as cofactor.

Functionally, transcriptional regulator. The polypeptide is Putative nickel-responsive regulator (Geotalea uraniireducens (strain Rf4) (Geobacter uraniireducens)).